A 356-amino-acid chain; its full sequence is Histidinol-phosphate aminotransferase (356 aa).

Residue lysine 211 is modified to N6-(pyridoxal phosphate)lysine.

It belongs to the class-II pyridoxal-phosphate-dependent aminotransferase family. Histidinol-phosphate aminotransferase subfamily. Homodimer. It depends on pyridoxal 5'-phosphate as a cofactor.

It carries out the reaction L-histidinol phosphate + 2-oxoglutarate = 3-(imidazol-4-yl)-2-oxopropyl phosphate + L-glutamate. The protein operates within amino-acid biosynthesis; L-histidine biosynthesis; L-histidine from 5-phospho-alpha-D-ribose 1-diphosphate: step 7/9. This is Histidinol-phosphate aminotransferase from Aeromonas hydrophila subsp. hydrophila (strain ATCC 7966 / DSM 30187 / BCRC 13018 / CCUG 14551 / JCM 1027 / KCTC 2358 / NCIMB 9240 / NCTC 8049).